The following is a 503-amino-acid chain: Secreted RxLR effector protein RXLR-C08 (503 aa).

Positions Met1–Ala22 are cleaved as a signal peptide. 3 N-linked (GlcNAc...) asparagine glycosylation sites follow: Asn27, Asn35, and Asn45. The dEER signature appears at Asp57–Arg60. 3 N-linked (GlcNAc...) asparagine glycosylation sites follow: Asn108, Asn197, and Asn374.

The protein belongs to the RxLR effector family.

The protein localises to the secreted. The protein resides in the host Golgi apparatus. In terms of biological role, secreted effector that suppresses pattern-triggered immunity (PTI) in plant host. The sequence is that of Secreted RxLR effector protein RXLR-C08 from Plasmopara halstedii (Downy mildew of sunflower).